Consider the following 894-residue polypeptide: MQSDTLTVQTVPNTTNVTNTEHSMLAKIEENRHIIQTIWEKQNLGKLTECEQFQKRLHSNLLLLAPLADHQQNYHKQQQALLQQQQQQQQALLQQQQQSPVTNVATNTPPTLQHSISSPSPNNFNNNNNANNQFLSPNSPQVAKSSPSQNNPSTPIANTPTTTTTTAATTATNTNTMMSGSSGGVVSPVSNQQQQQSIQSPSQQSVVQRSPSQSLNSSASSIQSLQNIQNTQNTIQQLTNSLTQVKTIIQQYQSQNQQVPQDVISRYHEFYSMLQQQQQNLLQQQSLLQQQQALLQQQQVGNPMQQSNDMQPQTPQQNNMQQQQQPQTPQQTNMQQPQTPQQNSMQPSQQPITQQEYQQIYDKIVSMSSQILLCNQNIQKLQSESYDPHVLQGLQNQVANLEIAQANSLRFLPQQYHVVLFQQQQQQQANQQQLQLMQIKQSKEYMVLTPAQQLIYNQQIQQNHYNQQVILRQQQQKLMAILEQQNQMIAQQQQQQHQMHQQHQMQPQQQQQQHQMHQQSPQQPQQMGMGGNPPSLEMISPMSAVMNGVTSPMNQGMMSSNNGMPTITTSLSAISPTSPIGTNLNMSNPTTTTVANVTTTAATTTTASSSGKEEKEKKKDKKDKDKDKDKDDDDKESKKDKKDKKDKKASKEKTSHWTSEEHNKFLEAVQQFGIKDYHAIAKFVQTRNHHQVRTHVNTYLKNQKKAEAATSSTQVSTPQQQLPIVGTPQQSVGTPQQQQPPIEQTPPPPQQQQQPPQLTPEQQLASQQQQATLQFQQYQQPQDQQQQQYQQYQQYDPQQQQQQPQQQPPPPQTTPPNNENNNNINNNLENTNNNDNGNNNNNEYNSGFDSNSGLNDEMGIGLFGSPGNNSNNNLGISIEGNNFDDNPSISSPGV.

The segment covering 93 to 139 (LQQQQQSPVTNVATNTPPTLQHSISSPSPNNFNNNNNANNQFLSPNS) has biased composition (low complexity). Disordered stretches follow at residues 93-221 (LQQQ…SASS), 299-353 (QVGN…QPIT), 492-539 (QQQQ…LEMI), and 601-659 (AATT…HWTS). Residues 140–149 (PQVAKSSPSQ) are compositionally biased toward polar residues. Positions 150-221 (NNPSTPIANT…SQSLNSSASS (72 aa)) are enriched in low complexity. The segment covering 300–309 (VGNPMQQSND) has biased composition (polar residues). Composition is skewed to low complexity over residues 310–353 (MQPQ…QPIT) and 492–527 (QQQQ…PQQM). Basic and acidic residues-rich tracts occupy residues 611 to 640 (GKEE…SKKD) and 649 to 659 (ASKEKTSHWTS). An HTH myb-type domain is found at 649 to 704 (ASKEKTSHWTSEEHNKFLEAVQQFGIKDYHAIAKFVQTRNHHQVRTHVNTYLKNQK). Positions 677–700 (YHAIAKFVQTRNHHQVRTHVNTYL) form a DNA-binding region, H-T-H motif. Residues 703–852 (QKKAEAATSS…EYNSGFDSNS (150 aa)) form a disordered region. Composition is skewed to low complexity over residues 710-742 (TSST…QPPI), 751-805 (QQQQ…QQPQ), and 815-845 (PPNN…NEYN).

The protein localises to the nucleus. The protein is Myb-like protein K (mybK) of Dictyostelium discoideum (Social amoeba).